The sequence spans 249 residues: ATP synthase subunit a (249 aa).

6 consecutive transmembrane segments (helical) span residues 26-46, 84-104, 114-134, 143-163, 185-205, and 208-228; these read FTNV…FLYL, FFPF…IGLF, IIVT…YGFF, LFVP…IEII, ITLK…ALGI, and TVLP…VAFL.

Belongs to the ATPase A chain family. As to quaternary structure, F-type ATPases have 2 components, CF(1) - the catalytic core - and CF(0) - the membrane proton channel. CF(1) has five subunits: alpha(3), beta(3), gamma(1), delta(1), epsilon(1). CF(0) has three main subunits: a(1), b(2) and c(9-12). The alpha and beta chains form an alternating ring which encloses part of the gamma chain. CF(1) is attached to CF(0) by a central stalk formed by the gamma and epsilon chains, while a peripheral stalk is formed by the delta and b chains.

It is found in the cell inner membrane. Its function is as follows. Key component of the proton channel; it plays a direct role in the translocation of protons across the membrane. The polypeptide is ATP synthase subunit a (Brucella ovis (strain ATCC 25840 / 63/290 / NCTC 10512)).